The primary structure comprises 180 residues: Translation initiation factor IF-3 (180 aa).

This sequence belongs to the IF-3 family. In terms of assembly, monomer.

It is found in the cytoplasm. In terms of biological role, IF-3 binds to the 30S ribosomal subunit and shifts the equilibrium between 70S ribosomes and their 50S and 30S subunits in favor of the free subunits, thus enhancing the availability of 30S subunits on which protein synthesis initiation begins. In Shewanella oneidensis (strain ATCC 700550 / JCM 31522 / CIP 106686 / LMG 19005 / NCIMB 14063 / MR-1), this protein is Translation initiation factor IF-3.